An 837-amino-acid polypeptide reads, in one-letter code: Protein translocase subunit SecA (837 aa).

Residues Q87, 105-109, and D494 each bind ATP; that span reads GEGKT. Residues 788 to 837 are disordered; the sequence is HKESKSDLEYSDSENTETKKKPKRRSEPKVGRNDPCPCGSGKKYKKCCGK. The Zn(2+) site is built by C823, C825, C834, and C835.

Belongs to the SecA family. In terms of assembly, monomer and homodimer. Part of the essential Sec protein translocation apparatus which comprises SecA, SecYEG and auxiliary proteins SecDF-YajC and YidC. Requires Zn(2+) as cofactor.

The protein resides in the cell inner membrane. It is found in the cytoplasm. The catalysed reaction is ATP + H2O + cellular proteinSide 1 = ADP + phosphate + cellular proteinSide 2.. Part of the Sec protein translocase complex. Interacts with the SecYEG preprotein conducting channel. Has a central role in coupling the hydrolysis of ATP to the transfer of proteins into and across the cell membrane, serving as an ATP-driven molecular motor driving the stepwise translocation of polypeptide chains across the membrane. The polypeptide is Protein translocase subunit SecA (Maridesulfovibrio salexigens (strain ATCC 14822 / DSM 2638 / NCIMB 8403 / VKM B-1763) (Desulfovibrio salexigens)).